Consider the following 644-residue polypeptide: MIRIRFGMDVLLVLLLATCLLSPAHGTPLEWDFAVTLRTKIQFMDSSWQTIATAAHEFDELSAITFDESEELIYFNDMRHQNGSIFSLKRDLVAANHVVEQRIARTGNESVGGLAYDPLTMNLFWSDIEQRKIFFAPIDGSAAPKVLVDLSAEGGRPDGVAVDVCRRKLYWTNSNVTHPTVERINLDGNNRTVIINSTIDMPRGIVVDQLSDRLFWIDDLKGVFFAIESSKLDGSDRLVVLKDKHHEPLNLAVTNDAIYWTDRTTRSVWSHPKVPVIRVTTTSKPVEEDSTDSTDFKDPEPVNEDCPLVRVANLSEEVRGIVVRTGFYQRLQKDHHCASIVRKVKERVDAQNTKFEVRSLQDQKMKILQDERCMNHGEYKPATDLCICPTGFKGSRCEIRECHNYCVHGTCQMSESAYPKCYCQPGFTGERCEVSVCAGLCLNGGHCRASKDEKEAPSCECPAKFGGARCEQNSTEICTLFCRLLKHEPEMYVPFGCHSICEELAQDNSTNIAVPQYQHLEVCLTPKVWTSSVIIILVIGIVSSLLLVAVIVHGIRRLYKPKRPRIRKTFVVRKQARTNSAGDTPLTNRPLATEQCEITIENCCNMNICETPCFDPKLVEQTLSKSSCKEDKKILIHNMEDDLY.

The N-terminal stretch at Met1 to Gly26 is a signal peptide. Topologically, residues Thr27–Ser531 are extracellular. Asn82 and Asn108 each carry an N-linked (GlcNAc...) asparagine glycan. 3 LDL-receptor class B repeats span residues Met121–Arg166, Arg167–Ser211, and Asp212–Ala257. 3 N-linked (GlcNAc...) asparagine glycosylation sites follow: Asn175, Asn190, and Asn196. The N-linked (GlcNAc...) asparagine glycan is linked to Asn313. 2 EGF-like domains span residues Glu398–Glu430 and Glu433–Glu471. 5 disulfide bridges follow: Cys402–Cys411, Cys406–Cys421, Cys437–Cys447, Cys441–Cys459, and Cys461–Cys470. 2 N-linked (GlcNAc...) asparagine glycosylation sites follow: Asn473 and Asn508. Residues Ser532–Val552 form a helical membrane-spanning segment. The Cytoplasmic portion of the chain corresponds to His553–Tyr644.

This sequence belongs to the cueball family.

The protein resides in the cell membrane. Functionally, has a role in spermatogenesis and oogenesis. In Drosophila erecta (Fruit fly), this protein is Protein cueball.